The sequence spans 357 residues: 3-isopropylmalate dehydrogenase (357 aa).

Arginine 97, arginine 107, arginine 135, and aspartate 224 together coordinate substrate. Mg(2+)-binding residues include aspartate 224, aspartate 248, and aspartate 252. Residue 282–294 (GSAPDIAGQDKAN) participates in NAD(+) binding.

The protein belongs to the isocitrate and isopropylmalate dehydrogenases family. LeuB type 1 subfamily. Homodimer. It depends on Mg(2+) as a cofactor. Requires Mn(2+) as cofactor.

It localises to the cytoplasm. The enzyme catalyses (2R,3S)-3-isopropylmalate + NAD(+) = 4-methyl-2-oxopentanoate + CO2 + NADH. The protein operates within amino-acid biosynthesis; L-leucine biosynthesis; L-leucine from 3-methyl-2-oxobutanoate: step 3/4. Catalyzes the oxidation of 3-carboxy-2-hydroxy-4-methylpentanoate (3-isopropylmalate) to 3-carboxy-4-methyl-2-oxopentanoate. The product decarboxylates to 4-methyl-2 oxopentanoate. This is 3-isopropylmalate dehydrogenase from Synechococcus sp. (strain CC9605).